The primary structure comprises 90 residues: Progonadoliberin-1 (90 aa).

An N-terminal signal peptide occupies residues 1-24; that stretch reads MSRHVTVVLLLAIVLLLSSHMIHG. Gln-25 is subject to Pyrrolidone carboxylic acid. Gly-34 carries the glycine amide modification.

Belongs to the GnRH family. As to expression, forebrain.

The protein resides in the secreted. Its function is as follows. Stimulates the secretion of gonadotropins. This Aquarana catesbeiana (American bullfrog) protein is Progonadoliberin-1 (gnrh1).